Here is a 45-residue protein sequence, read N- to C-terminus: Endo-1,4-beta-xylanase Xyn10A (45 aa).

Belongs to the glycosyl hydrolase 10 (cellulase F) family.

The protein localises to the secreted. The protein resides in the extracellular space. The catalysed reaction is Endohydrolysis of (1-&gt;4)-beta-D-xylosidic linkages in xylans.. It carries out the reaction Endohydrolysis of (1-&gt;4)-beta-D-glucosidic linkages in cellulose, lichenin and cereal beta-D-glucans.. It participates in glycan degradation; xylan degradation. Its function is as follows. Has xylanase, avicelase and cellobiohydrolase activity. The sequence is that of Endo-1,4-beta-xylanase Xyn10A from Gloeophyllum trabeum (Brown rot fungus).